The primary structure comprises 258 residues: Aspartate/glutamate leucyltransferase (258 aa).

Belongs to the R-transferase family. Bpt subfamily.

The protein resides in the cytoplasm. The catalysed reaction is N-terminal L-glutamyl-[protein] + L-leucyl-tRNA(Leu) = N-terminal L-leucyl-L-glutamyl-[protein] + tRNA(Leu) + H(+). It catalyses the reaction N-terminal L-aspartyl-[protein] + L-leucyl-tRNA(Leu) = N-terminal L-leucyl-L-aspartyl-[protein] + tRNA(Leu) + H(+). Its function is as follows. Functions in the N-end rule pathway of protein degradation where it conjugates Leu from its aminoacyl-tRNA to the N-termini of proteins containing an N-terminal aspartate or glutamate. This chain is Aspartate/glutamate leucyltransferase, found in Rhizobium johnstonii (strain DSM 114642 / LMG 32736 / 3841) (Rhizobium leguminosarum bv. viciae).